The chain runs to 501 residues: Ribose import ATP-binding protein RbsA (501 aa).

ABC transporter domains follow at residues 5 to 241 (LELK…VGRK) and 249 to 495 (LNLP…VGKQ). 37-44 (GENGAGKS) lines the ATP pocket.

It belongs to the ABC transporter superfamily. Ribose importer (TC 3.A.1.2.1) family. In terms of assembly, the complex is composed of an ATP-binding protein (RbsA), two transmembrane proteins (RbsC) and a solute-binding protein (RbsB).

It is found in the cell inner membrane. It catalyses the reaction D-ribose(out) + ATP + H2O = D-ribose(in) + ADP + phosphate + H(+). Part of the ABC transporter complex RbsABC involved in ribose import. Responsible for energy coupling to the transport system. This is Ribose import ATP-binding protein RbsA from Photorhabdus laumondii subsp. laumondii (strain DSM 15139 / CIP 105565 / TT01) (Photorhabdus luminescens subsp. laumondii).